The following is a 455-amino-acid chain: Argininosuccinate lyase (455 aa).

Belongs to the lyase 1 family. Argininosuccinate lyase subfamily.

The protein localises to the cytoplasm. The catalysed reaction is 2-(N(omega)-L-arginino)succinate = fumarate + L-arginine. It participates in amino-acid biosynthesis; L-arginine biosynthesis; L-arginine from L-ornithine and carbamoyl phosphate: step 3/3. The sequence is that of Argininosuccinate lyase from Shewanella sp. (strain MR-4).